The primary structure comprises 221 residues: uncharacterized protein (221 aa).

Helical transmembrane passes span 2-22, 34-54, 97-117, 131-151, and 177-197; these read FIAKSIVIGLLICVLFFFFFV, LLTLGLLNASLTALSDLLAQA, AYGLCLTPIQFRWFVALSNVI, ALDQFIFAPLGIVFFFLFMGI, and ILWPAVQLFNFTFVPLVLQVI.

The protein belongs to the peroxisomal membrane protein PXMP2/4 family.

Its subcellular location is the membrane. This is an uncharacterized protein from Schizosaccharomyces pombe (strain 972 / ATCC 24843) (Fission yeast).